The sequence spans 218 residues: Phosphatidylserine decarboxylase proenzyme (218 aa).

Residue Ser-182 is the Schiff-base intermediate with substrate; via pyruvic acid of the active site. Residue Ser-182 is modified to Pyruvic acid (Ser); by autocatalysis.

This sequence belongs to the phosphatidylserine decarboxylase family. PSD-A subfamily. Heterodimer of a large membrane-associated beta subunit and a small pyruvoyl-containing alpha subunit. The cofactor is pyruvate. Post-translationally, is synthesized initially as an inactive proenzyme. Formation of the active enzyme involves a self-maturation process in which the active site pyruvoyl group is generated from an internal serine residue via an autocatalytic post-translational modification. Two non-identical subunits are generated from the proenzyme in this reaction, and the pyruvate is formed at the N-terminus of the alpha chain, which is derived from the carboxyl end of the proenzyme. The post-translation cleavage follows an unusual pathway, termed non-hydrolytic serinolysis, in which the side chain hydroxyl group of the serine supplies its oxygen atom to form the C-terminus of the beta chain, while the remainder of the serine residue undergoes an oxidative deamination to produce ammonia and the pyruvoyl prosthetic group on the alpha chain.

Its subcellular location is the cell membrane. The catalysed reaction is a 1,2-diacyl-sn-glycero-3-phospho-L-serine + H(+) = a 1,2-diacyl-sn-glycero-3-phosphoethanolamine + CO2. Its pathway is phospholipid metabolism; phosphatidylethanolamine biosynthesis; phosphatidylethanolamine from CDP-diacylglycerol: step 2/2. In terms of biological role, catalyzes the formation of phosphatidylethanolamine (PtdEtn) from phosphatidylserine (PtdSer). In Oleidesulfovibrio alaskensis (strain ATCC BAA-1058 / DSM 17464 / G20) (Desulfovibrio alaskensis), this protein is Phosphatidylserine decarboxylase proenzyme.